We begin with the raw amino-acid sequence, 403 residues long: Ribosomal RNA large subunit methyltransferase I (403 aa).

In terms of domain architecture, PUA spans 9–88 (YPRLILSKGR…ESIDIAFFTR (80 aa)).

Belongs to the methyltransferase superfamily. RlmI family.

The protein localises to the cytoplasm. The catalysed reaction is cytidine(1962) in 23S rRNA + S-adenosyl-L-methionine = 5-methylcytidine(1962) in 23S rRNA + S-adenosyl-L-homocysteine + H(+). Its function is as follows. Specifically methylates the cytosine at position 1962 (m5C1962) of 23S rRNA. In Salmonella paratyphi C (strain RKS4594), this protein is Ribosomal RNA large subunit methyltransferase I.